The chain runs to 204 residues: IMPACT family member YigZ (204 aa).

The protein belongs to the IMPACT family. In terms of assembly, monomer.

The protein is IMPACT family member YigZ (yigZ) of Escherichia coli (strain K12).